The sequence spans 259 residues: Putative zinc metalloprotease Rip2 (259 aa).

The next 2 membrane-spanning stretches (helical) occupy residues 14–34 (PIFL…WLAG) and 39–59 (PLAY…SLCL). Residue histidine 60 coordinates Zn(2+). Residue glutamate 61 is part of the active site. Residue histidine 64 coordinates Zn(2+). 4 consecutive transmembrane segments (helical) span residues 97 to 117 (GLPM…AVYV), 128 to 148 (TLVS…LLAA), 156 to 176 (IHAV…TALV), and 211 to 231 (LVFL…FGVV).

This sequence belongs to the peptidase M50B family. Requires Zn(2+) as cofactor.

The protein resides in the cell membrane. The protein is Putative zinc metalloprotease Rip2 (rip2) of Mycobacterium tuberculosis (strain ATCC 25618 / H37Rv).